We begin with the raw amino-acid sequence, 443 residues long: Endothelin receptor type B (443 aa).

Positions 1-26 are cleaved as a signal peptide; the sequence is MQPLRSLCGRALVALIFACGVAGVQS. The Extracellular portion of the chain corresponds to 27 to 102; it reads EERGFPPAGA…GPIEIKDTFK (76 aa). The disordered stretch occupies residues 53–89; that stretch reads TFWPRGSNASLPRSSSPPQMPKGGRMAGPPARTLTPP. Positions 59–69 are enriched in polar residues; the sequence is SNASLPRSSSP. N60 carries an N-linked (GlcNAc...) asparagine glycan. A helical membrane pass occupies residues 103 to 127; that stretch reads YINTVVSCLVFVLGIIGNSTLLRII. The Cytoplasmic portion of the chain corresponds to 128 to 138; sequence YKNKCMRNGPN. Residues 139–164 traverse the membrane as a helical segment; sequence ILIASLALGDLLHIIIDIPINVYKLL. Residues 165-176 lie on the Extracellular side of the membrane; that stretch reads AEDWPFGVEMCK. A disulfide bond links C175 and C256. A helical transmembrane segment spans residues 177–198; the sequence is LVPFIQKASVGITVLSLCALSI. Over 199 to 219 the chain is Cytoplasmic; sequence DRYRAVASWSRIKGIGVPKWT. Residues 220–244 traverse the membrane as a helical segment; the sequence is AVEIVLIWVVSVVLAVPEALGFDMI. Residues 245-272 lie on the Extracellular side of the membrane; it reads TTDYKGNRLRICLLHPTQKTAFMQFYKT. A helical transmembrane segment spans residues 273-297; sequence AKDWWLFSFYFCLPLAITAFFYTLM. The Cytoplasmic portion of the chain corresponds to 298–325; the sequence is TCEMLRKKSGMQIALNDHLKQRREVAKT. S306 carries the post-translational modification Phosphoserine. Residues 326–351 traverse the membrane as a helical segment; it reads VFCLVLVFALCWLPLHLSRILKLTLY. The Extracellular segment spans residues 352 to 363; sequence DQNDSNRCELLS. The N-linked (GlcNAc...) asparagine glycan is linked to N354. Residues 364–390 form a helical membrane-spanning segment; that stretch reads FLLVLDYIGINMASLNSCINPIALYLV. At 391-443 the chain is on the cytoplasmic side; the sequence is SKRFKNCFKSCLCCWCQSFEEKQSLEEKQSCLKFKANDHGYDNFRSSNKYSSS. Residues C403, C404, and C406 are each lipidated (S-palmitoyl cysteine). Position 420 is a phosphoserine (S420). Phosphotyrosine is present on Y440. A phosphoserine mark is found at S441, S442, and S443.

The protein belongs to the G-protein coupled receptor 1 family. Endothelin receptor subfamily. EDNRB sub-subfamily.

The protein localises to the cell membrane. Its function is as follows. Non-specific receptor for endothelin 1, 2, and 3. Mediates its action by association with G proteins that activate a phosphatidylinositol-calcium second messenger system. The polypeptide is Endothelin receptor type B (EDNRB) (Sus scrofa (Pig)).